The chain runs to 312 residues: E3 ubiquitin-protein ligase RNF126-B (312 aa).

Zn(2+)-binding residues include Cys-13, Cys-16, Cys-29, and Cys-32. Residues 13–32 (CHSCTAEITPRLPEYTCPRC) form a C4-type zinc finger. Disordered stretches follow at residues 41–63 (PETSRNSESNSSNNSGTDQNRPS) and 96–139 (GTSG…RNEG). The span at 44-55 (SRNSESNSSNNS) shows a compositional bias: low complexity. Over residues 102–115 (EETRDGESRREHQS) the composition is skewed to basic and acidic residues. Residues 124 to 134 (PRARMSTRRGA) are compositionally biased toward basic residues. Residues 228–269 (CPVCKEDYTVGESVRQLPCNHLFHNDCIIPWLEQHDTCPVCR) form an RING-type zinc finger. Residues 275-312 (QNTATNPPGLTDMTFSSSSTSSSSSTSPTDENNTANNS) form a disordered region. The span at 290-301 (SSSSTSSSSSTS) shows a compositional bias: low complexity. Positions 302–312 (PTDENNTANNS) are enriched in polar residues.

The protein resides in the cytoplasm. The protein localises to the nucleus. The enzyme catalyses S-ubiquitinyl-[E2 ubiquitin-conjugating enzyme]-L-cysteine + [acceptor protein]-L-lysine = [E2 ubiquitin-conjugating enzyme]-L-cysteine + N(6)-ubiquitinyl-[acceptor protein]-L-lysine.. The protein operates within protein modification; protein ubiquitination. E3 ubiquitin-protein ligase that mediates ubiquitination oF target proteins. Depending on the associated E2 ligase, mediates 'Lys-27'-, 'Lys-29'-, 'Lys-48'- and/or 'Lys-63'-linked polyubiquitination of substrates. Part of a BAG6-dependent quality control process ensuring that proteins of the secretory pathway that are mislocalized to the cytosol are degraded by the proteasome. Probably acts by providing the ubiquitin ligase activity associated with the BAG6 complex and be responsible for ubiquitination of the hydrophobic mislocalized proteins and their targeting to the proteasome. This Xenopus laevis (African clawed frog) protein is E3 ubiquitin-protein ligase RNF126-B.